The primary structure comprises 100 residues: Large ribosomal subunit protein uL23 (100 aa).

The protein belongs to the universal ribosomal protein uL23 family. In terms of assembly, part of the 50S ribosomal subunit. Contacts protein L29, and trigger factor when it is bound to the ribosome.

One of the early assembly proteins it binds 23S rRNA. One of the proteins that surrounds the polypeptide exit tunnel on the outside of the ribosome. Forms the main docking site for trigger factor binding to the ribosome. The protein is Large ribosomal subunit protein uL23 of Lactobacillus acidophilus (strain ATCC 700396 / NCK56 / N2 / NCFM).